We begin with the raw amino-acid sequence, 435 residues long: Elongation factor 1-alpha (435 aa).

The 226-residue stretch at 4 to 229 folds into the tr-type G domain; sequence KPHLNLIVIG…DMLEIPPKPV (226 aa). The G1 stretch occupies residues 13–20; sequence GHVDHGKS. 13 to 20 lines the GTP pocket; the sequence is GHVDHGKS. Residue serine 20 participates in Mg(2+) binding. The G2 stretch occupies residues 69 to 73; sequence GVTIN. The segment at 90-93 is G3; that stretch reads DAPG. Residues 90–94 and 152–155 each bind GTP; these read DAPGH and TKMD. The interval 152 to 155 is G4; it reads TKMD. Residues 193–195 are G5; it reads VSI.

It belongs to the TRAFAC class translation factor GTPase superfamily. Classic translation factor GTPase family. EF-Tu/EF-1A subfamily.

The protein localises to the cytoplasm. The enzyme catalyses GTP + H2O = GDP + phosphate + H(+). In terms of biological role, GTP hydrolase that promotes the GTP-dependent binding of aminoacyl-tRNA to the A-site of ribosomes during protein biosynthesis. This Metallosphaera sedula (strain ATCC 51363 / DSM 5348 / JCM 9185 / NBRC 15509 / TH2) protein is Elongation factor 1-alpha.